The chain runs to 490 residues: Trigger factor (490 aa).

Residues 162–243 (GDFVSIDLSA…VGSIKERELP (82 aa)) enclose the PPIase FKBP-type domain. A disordered region spans residues 433-490 (VDAVLGPRRGGADEAGAEAEAAEEKPAKAKKSADSEKTDKSEKAEKKSKKKSKDDDAE). The span at 454–477 (AEEKPAKAKKSADSEKTDKSEKAE) shows a compositional bias: basic and acidic residues.

This sequence belongs to the FKBP-type PPIase family. Tig subfamily.

The protein localises to the cytoplasm. The enzyme catalyses [protein]-peptidylproline (omega=180) = [protein]-peptidylproline (omega=0). Involved in protein export. Acts as a chaperone by maintaining the newly synthesized protein in an open conformation. Functions as a peptidyl-prolyl cis-trans isomerase. The sequence is that of Trigger factor from Mycobacteroides abscessus (strain ATCC 19977 / DSM 44196 / CCUG 20993 / CIP 104536 / JCM 13569 / NCTC 13031 / TMC 1543 / L948) (Mycobacterium abscessus).